A 620-amino-acid chain; its full sequence is MPGRKFADGEVVRGRWPGSSLYYEVEILSHDSTSQLYTVKYKDGTELELKESDIKPLKSFKQRKSGSTSSSPSRRRSSRSRSRSRSRSPGRAPKGSRRSVSASYQADAKEKEMRREILQVKLTPLVLKPFANSVSVYNGEPEHMEKSATPPKNKQERVILSTEDSYIATQYSLRPRREEVKPKHRVRGTNLVTRGPVPLGTFQVTTPQRRDLEFGGVPGALLIMLGLPACVFLLLLQCAQKDPGLLQFPPPLPALRELWEARVCGVYLLWFFLQALFSLLPVGKVVEGTPLVDGRRLKYRLNGLYAFILTSAAVGTAVFWDIELYYLYTHFLQFALAAIVFSVVLSVYLYARSLKVPRDELSPASSGNAVYDFFIGRELNPRIGAFDLKFFCELRPGLIGWVVINLVMLLAEMKVQERSAPSLAMTLVNSFQLLYVVDALWFEEALLTTMDIIHDGFGFMLAFGDLVWVPFTYSLQAFYLVNHPQDLSWPLTSVIIALKLCGYVIFRCANSQKNAFRKNPTDPKLAHLKTIPTSTWKSLLVSGWWGFVRHPNYLGDLIMALAWSLPCGFNHILPYFYVIYFTALLIHREARDEHQCRRKYGLAWEKYCQRVPYRIFPYIY.

A Tudor domain is found at 1 to 62 (MPGRKFADGE…DIKPLKSFKQ (62 aa)). The Nuclear segment spans residues 1-215 (MPGRKFADGE…TPQRRDLEFG (215 aa)). Residues 52–111 (SDIKPLKSFKQRKSGSTSSSPSRRRSSRSRSRSRSRSPGRAPKGSRRSVSASYQADAKEK) form a disordered region. Position 55 is an N6-acetyllysine (lysine 55). A phosphoserine mark is found at serine 59 and serine 67. 2 positions are modified to phosphoserine; by CDK1: serine 71 and serine 86. Basic residues predominate over residues 73-88 (SRRRSSRSRSRSRSRS). Serine 88 bears the Phosphoserine mark. Residue serine 96 is glycosylated (O-linked (GlcNAc) serine). A phosphoserine mark is found at serine 99 and serine 101. Phosphothreonine is present on threonine 123. Phosphoserine is present on serine 133. Threonine 205 is subject to Phosphothreonine. The next 8 helical transmembrane spans lie at 216–236 (GVPG…LLLL), 263–283 (VCGV…LPVG), 304–324 (LYAF…DIEL), 331–351 (FLQF…YLYA), 452–472 (IIHD…VPFT), 486–506 (DLSW…YVIF), 525–547 (LAHL…WWGF), and 566–586 (PCGF…ALLI). Residues lysine 599 and lysine 606 each carry the N6-acetyllysine modification.

It belongs to the ERG4/ERG24 family. In terms of assembly, interacts with CBX5. Interacts with DNA. Interaction with DNA is sequence independent with higher affinity for supercoiled and relaxed circular DNA than linear DNA. Interacts with lamin B. Interacts with CLNK. Interacts with TMEM147; promoting LBR localization to the nucleus inner membrane. In terms of processing, phosphorylated by CDK1 in mitosis when the inner nuclear membrane breaks down into vesicles that dissociate from the lamina and the chromatin. It is phosphorylated by different protein kinases in interphase when the membrane is associated with these structures. Phosphorylation of LBR and HP1 proteins may be responsible for some of the alterations in chromatin organization and nuclear structure which occur at various times during the cell cycle. Phosphorylated by SRPK1. In late anaphase LBR is dephosphorylated, probably by PP1 and/or PP2A, allowing reassociation with chromatin.

The protein resides in the nucleus inner membrane. It is found in the nucleus. Its subcellular location is the cytoplasm. It localises to the endoplasmic reticulum membrane. It catalyses the reaction 5alpha-cholest-8,14-dien-3beta-ol + NADPH + H(+) = 5alpha-cholest-8-en-3beta-ol + NADP(+). The catalysed reaction is 4,4-dimethyl-5alpha-cholesta-8,24-dien-3beta-ol + NADP(+) = 4,4-dimethyl-5alpha-cholesta-8,14,24-trien-3beta-ol + NADPH + H(+). It carries out the reaction 4,4-dimethyl-8,14-cholestadien-3beta-ol + NADPH + H(+) = 4,4-dimethyl-5alpha-cholest-8-en-3beta-ol + NADP(+). It functions in the pathway steroid biosynthesis; cholesterol biosynthesis. Functionally, catalyzes the reduction of the C14-unsaturated bond of lanosterol, as part of the metabolic pathway leading to cholesterol biosynthesis. Plays a critical role in myeloid cell cholesterol biosynthesis which is essential to both myeloid cell growth and functional maturation. Mediates the activation of NADPH oxidases, perhaps by maintaining critical levels of cholesterol required for membrane lipid raft formation during neutrophil differentiation. Anchors the lamina and the heterochromatin to the inner nuclear membrane. The protein is Delta(14)-sterol reductase LBR (Lbr) of Rattus norvegicus (Rat).